A 373-amino-acid polypeptide reads, in one-letter code: Deoxyguanosinetriphosphate triphosphohydrolase-like protein 1 (373 aa).

Residues 21-43 (RSSEARRAVPEAPSETRTAYQKD) form a disordered region. The HD domain maps to 76-198 (RLTHTLEVQQ…VDAADALAYT (123 aa)).

It belongs to the dGTPase family. Type 2 subfamily.

This chain is Deoxyguanosinetriphosphate triphosphohydrolase-like protein 1, found in Deinococcus radiodurans (strain ATCC 13939 / DSM 20539 / JCM 16871 / CCUG 27074 / LMG 4051 / NBRC 15346 / NCIMB 9279 / VKM B-1422 / R1).